A 159-amino-acid chain; its full sequence is SsrA-binding protein (159 aa).

This sequence belongs to the SmpB family.

Its subcellular location is the cytoplasm. Functionally, required for rescue of stalled ribosomes mediated by trans-translation. Binds to transfer-messenger RNA (tmRNA), required for stable association of tmRNA with ribosomes. tmRNA and SmpB together mimic tRNA shape, replacing the anticodon stem-loop with SmpB. tmRNA is encoded by the ssrA gene; the 2 termini fold to resemble tRNA(Ala) and it encodes a 'tag peptide', a short internal open reading frame. During trans-translation Ala-aminoacylated tmRNA acts like a tRNA, entering the A-site of stalled ribosomes, displacing the stalled mRNA. The ribosome then switches to translate the ORF on the tmRNA; the nascent peptide is terminated with the 'tag peptide' encoded by the tmRNA and targeted for degradation. The ribosome is freed to recommence translation, which seems to be the essential function of trans-translation. This is SsrA-binding protein from Coxiella burnetii (strain RSA 331 / Henzerling II).